The sequence spans 115 residues: Ribonuclease P protein component 4 (115 aa).

Zn(2+) contacts are provided by cysteine 66, cysteine 69, cysteine 96, and cysteine 99.

It belongs to the eukaryotic/archaeal RNase P protein component 4 family. In terms of assembly, consists of a catalytic RNA component and at least 4-5 protein subunits. It depends on Zn(2+) as a cofactor.

It is found in the cytoplasm. The catalysed reaction is Endonucleolytic cleavage of RNA, removing 5'-extranucleotides from tRNA precursor.. Functionally, part of ribonuclease P, a protein complex that generates mature tRNA molecules by cleaving their 5'-ends. This chain is Ribonuclease P protein component 4, found in Hyperthermus butylicus (strain DSM 5456 / JCM 9403 / PLM1-5).